The following is a 289-amino-acid chain: MACPPELEESLVWKLTDLGLHRHAVQHAPETPDRKQLLLWLPQPEWPEAERQQLLASLEPLAEPFGLPLPQGHWDDVADEDWSLSWKQHWQPDPVGEGLLILPAWLEVPPEHGERLVIRMDPGSAFGTGSHPTTRLCLEALEKAPPVGALVADLGCGSGVLGLAALGLGATAVVAADTDSLAVRATGDNRELNGRPADLLKVSLGSVEALQHLLEGRRADLLLCNILAPVIEALAPGFEALVAPEGRALLSGLLVDQAPRLEQVLGDLGWRVSARGSQGRWGLLEIQRR.

4 residues coordinate S-adenosyl-L-methionine: Thr134, Gly155, Asp177, and Asn225.

Belongs to the methyltransferase superfamily. PrmA family.

It localises to the cytoplasm. The enzyme catalyses L-lysyl-[protein] + 3 S-adenosyl-L-methionine = N(6),N(6),N(6)-trimethyl-L-lysyl-[protein] + 3 S-adenosyl-L-homocysteine + 3 H(+). Methylates ribosomal protein L11. This chain is Ribosomal protein L11 methyltransferase, found in Parasynechococcus marenigrum (strain WH8102).